The primary structure comprises 91 residues: UPF0250 protein PSPTO_4820 (91 aa).

Belongs to the UPF0250 family.

The polypeptide is UPF0250 protein PSPTO_4820 (Pseudomonas syringae pv. tomato (strain ATCC BAA-871 / DC3000)).